A 935-amino-acid chain; its full sequence is C-1-tetrahydrofolate synthase, cytoplasmic (935 aa).

An N-acetylmethionine modification is found at methionine 1. A methylenetetrahydrofolate dehydrogenase and methenyltetrahydrofolate cyclohydrolase (D/C) domain region spans residues 2–291; it reads APAGILNGKL…MLMQSTVESA (290 aa). Substrate is bound by residues 52-56 and 99-101; these read YINVK and VQL. Residue lysine 56 is part of the active site. NADP(+) contacts are provided by residues 172 to 174 and serine 197; that span reads GRS. 272-276 is a substrate binding site; sequence PGGVG. Residues 310–935 are formyltetrahydrofolate synthetase domain; the sequence is LNLKTPVPSD…PETEQVNGLF (626 aa). At serine 318 the chain carries Phosphoserine. Residue 380-387 participates in ATP binding; that stretch reads TPLGEGKS. Serine 413 and serine 490 each carry phosphoserine.

This sequence in the N-terminal section; belongs to the tetrahydrofolate dehydrogenase/cyclohydrolase family. It in the C-terminal section; belongs to the formate--tetrahydrofolate ligase family. As to quaternary structure, homodimer.

It localises to the cytoplasm. The catalysed reaction is (6R)-5,10-methylene-5,6,7,8-tetrahydrofolate + NADP(+) = (6R)-5,10-methenyltetrahydrofolate + NADPH. The enzyme catalyses (6R)-5,10-methenyltetrahydrofolate + H2O = (6R)-10-formyltetrahydrofolate + H(+). It catalyses the reaction (6S)-5,6,7,8-tetrahydrofolate + formate + ATP = (6R)-10-formyltetrahydrofolate + ADP + phosphate. The protein operates within one-carbon metabolism; tetrahydrofolate interconversion. In terms of biological role, trifunctional enzyme that catalyzes the interconversion of three forms of one-carbon-substituted tetrahydrofolate: (6R)-5,10-methylene-5,6,7,8-tetrahydrofolate, 5,10-methenyltetrahydrofolate and (6S)-10-formyltetrahydrofolate. These derivatives of tetrahydrofolate are differentially required in nucleotide and amino acid biosynthesis, (6S)-10-formyltetrahydrofolate being required for purine biosynthesis while (6R)-5,10-methylene-5,6,7,8-tetrahydrofolate is used for serine and methionine biosynthesis for instance. The protein is C-1-tetrahydrofolate synthase, cytoplasmic (Mthfd1) of Mus musculus (Mouse).